Here is a 100-residue protein sequence, read N- to C-terminus: NADH-quinone oxidoreductase subunit K (100 aa).

3 helical membrane-spanning segments follow: residues 4 to 24 (LQHGLILAAILFVLGLTGLII), 28 to 48 (LLFMLISLEVMINAAALAFVV), and 60 to 80 (VMYILAITLAAAEASIGLALL).

It belongs to the complex I subunit 4L family. NDH-1 is composed of 13 different subunits. Subunits NuoA, H, J, K, L, M, N constitute the membrane sector of the complex.

The protein localises to the cell inner membrane. The catalysed reaction is a quinone + NADH + 5 H(+)(in) = a quinol + NAD(+) + 4 H(+)(out). Its function is as follows. NDH-1 shuttles electrons from NADH, via FMN and iron-sulfur (Fe-S) centers, to quinones in the respiratory chain. The immediate electron acceptor for the enzyme in this species is believed to be ubiquinone. Couples the redox reaction to proton translocation (for every two electrons transferred, four hydrogen ions are translocated across the cytoplasmic membrane), and thus conserves the redox energy in a proton gradient. This chain is NADH-quinone oxidoreductase subunit K, found in Yersinia enterocolitica serotype O:8 / biotype 1B (strain NCTC 13174 / 8081).